Here is a 209-residue protein sequence, read N- to C-terminus: Pyridoxine/pyridoxamine 5'-phosphate oxidase (209 aa).

Residues 57-62, 72-73, K79, and Q101 each bind FMN; these read RMVLLK and YT. Residue K62 coordinates substrate. Residues Y119, R123, and S127 each contribute to the substrate site. FMN contacts are provided by residues 136–137 and W181; that span reads QS. 187 to 189 serves as a coordination point for substrate; sequence RLH. R191 is a binding site for FMN.

The protein belongs to the pyridoxamine 5'-phosphate oxidase family. In terms of assembly, homodimer. It depends on FMN as a cofactor.

The enzyme catalyses pyridoxamine 5'-phosphate + O2 + H2O = pyridoxal 5'-phosphate + H2O2 + NH4(+). The catalysed reaction is pyridoxine 5'-phosphate + O2 = pyridoxal 5'-phosphate + H2O2. The protein operates within cofactor metabolism; pyridoxal 5'-phosphate salvage; pyridoxal 5'-phosphate from pyridoxamine 5'-phosphate: step 1/1. It functions in the pathway cofactor metabolism; pyridoxal 5'-phosphate salvage; pyridoxal 5'-phosphate from pyridoxine 5'-phosphate: step 1/1. Catalyzes the oxidation of either pyridoxine 5'-phosphate (PNP) or pyridoxamine 5'-phosphate (PMP) into pyridoxal 5'-phosphate (PLP). In Chelativorans sp. (strain BNC1), this protein is Pyridoxine/pyridoxamine 5'-phosphate oxidase.